The primary structure comprises 488 residues: Sterol 14-demethylase (488 aa).

The helical transmembrane segment at threonine 12–serine 32 threads the bilayer. Cysteine 433 contributes to the heme binding site.

The protein belongs to the cytochrome P450 family. Heme is required as a cofactor. Expressed in leaves, roots, stems, siliques, flowers, flower buds and seedlings.

Its subcellular location is the membrane. It catalyses the reaction a 14alpha-methyl steroid + 3 reduced [NADPH--hemoprotein reductase] + 3 O2 = a Delta(14) steroid + formate + 3 oxidized [NADPH--hemoprotein reductase] + 4 H2O + 4 H(+). In terms of biological role, involved in sterol biosynthesis. Catalyzes the 14-alpha demethylation of obtusifoliol to 4 alpha-methyl-5 alpha-ergosta-8,14,24(28)-trien-3 beta-ol. This chain is Sterol 14-demethylase (CYP51G1), found in Arabidopsis thaliana (Mouse-ear cress).